The following is a 407-amino-acid chain: Tryptophan synthase beta chain (407 aa).

Lys98 is modified (N6-(pyridoxal phosphate)lysine).

Belongs to the TrpB family. As to quaternary structure, tetramer of two alpha and two beta chains. Pyridoxal 5'-phosphate is required as a cofactor.

The enzyme catalyses (1S,2R)-1-C-(indol-3-yl)glycerol 3-phosphate + L-serine = D-glyceraldehyde 3-phosphate + L-tryptophan + H2O. It functions in the pathway amino-acid biosynthesis; L-tryptophan biosynthesis; L-tryptophan from chorismate: step 5/5. Functionally, the beta subunit is responsible for the synthesis of L-tryptophan from indole and L-serine. The sequence is that of Tryptophan synthase beta chain from Bradyrhizobium sp. (strain ORS 278).